A 303-amino-acid chain; its full sequence is Beta-lactamase L2 (303 aa).

A signal peptide (tat-type signal) is located at residues Met-1–Ala-35. Residue Ser-83 is the Acyl-ester intermediate of the active site. Lys-247–Gly-249 contacts substrate.

Belongs to the class-A beta-lactamase family. Post-translationally, predicted to be exported by the Tat system. The position of the signal peptide cleavage has not been experimentally proven.

It carries out the reaction a beta-lactam + H2O = a substituted beta-amino acid. The polypeptide is Beta-lactamase L2 (Stenotrophomonas maltophilia (Pseudomonas maltophilia)).